A 332-amino-acid polypeptide reads, in one-letter code: MKVAVLGAGAWGTALAAHLAVRHDTLLWARDAALVAELAARRENARYLGGVALPPGLRYEADLATALSHAQADDALCVIAAPVAGLRALCRAMRDARRVPAHFVWVCKGFEADTRRLPHQMVAEELPDHASYGVLSGPSFAREVAQGLPVALTVASASAACRERTLAAFHHGAMRIYTGDDVVGVEVGGAVKNVLAIATGIADGLGLGLNARAALVTRGLAEMSRLGVALGGRAETFTGLTGLGDLILTATGDLSRNRSVGLQLAAGRSLDDILAALGHVAEGVRCARAVLSIARERGVDMPITEAVCAVLFDGVAPRDAVSGLLRRDAKAE.

Tryptophan 11, arginine 30, and lysine 108 together coordinate NADPH. Lysine 108, glycine 137, and serine 139 together coordinate sn-glycerol 3-phosphate. Alanine 141 serves as a coordination point for NADPH. Residues lysine 192, aspartate 245, serine 255, arginine 256, and asparagine 257 each coordinate sn-glycerol 3-phosphate. Lysine 192 functions as the Proton acceptor in the catalytic mechanism. Arginine 256 lines the NADPH pocket. Valine 280 and glutamate 282 together coordinate NADPH.

This sequence belongs to the NAD-dependent glycerol-3-phosphate dehydrogenase family.

Its subcellular location is the cytoplasm. The enzyme catalyses sn-glycerol 3-phosphate + NAD(+) = dihydroxyacetone phosphate + NADH + H(+). It carries out the reaction sn-glycerol 3-phosphate + NADP(+) = dihydroxyacetone phosphate + NADPH + H(+). Its pathway is membrane lipid metabolism; glycerophospholipid metabolism. In terms of biological role, catalyzes the reduction of the glycolytic intermediate dihydroxyacetone phosphate (DHAP) to sn-glycerol 3-phosphate (G3P), the key precursor for phospholipid synthesis. The sequence is that of Glycerol-3-phosphate dehydrogenase [NAD(P)+] from Burkholderia mallei (strain ATCC 23344).